Consider the following 1297-residue polypeptide: Insulin receptor-related protein (1297 aa).

The N-terminal stretch at 1-26 is a signal peptide; that stretch reads MAVPSLWPWGACLPVIFLSLGFGLDT. N47 is a glycosylation site (N-linked (GlcNAc...) asparagine). Intrachain disulfides connect C214–C222, C216–C228, C229–C237, C233–C246, C249–C258, C262–C274, C280–C300, C304–C317, and C320–C324. N311 carries an N-linked (GlcNAc...) asparagine glycan. N-linked (GlcNAc...) asparagine glycosylation is found at N411, N492, N528, N616, and N634. Fibronectin type-III domains lie at 483–603 and 607–707; these read QTRT…TLPA and VPQD…AQEA. C657 and C864 form a disulfide bridge. Disordered stretches follow at residues 666 to 687 and 732 to 758; these read SNND…ESDC and SINK…GNSS. Residues 675-685 show a composition bias toward acidic residues; it reads EDGDPEAEMES. The Extracellular portion of the chain corresponds to 747–921; that stretch reads AAGPLRLGGN…PEEEDAGGLH (175 aa). Residues N756, N885, and N898 are each glycosylated (N-linked (GlcNAc...) asparagine). Positions 818–913 constitute a Fibronectin type-III 3 domain; sequence IPGKVAWEAS…SVAFYILGPE (96 aa). The helical transmembrane segment at 922 to 943 threads the bilayer; it reads VLLTATPVGLTLLIVLAALGFF. Topologically, residues 944–1297 are cytoplasmic; that stretch reads YGKKRNRTLY…CSPQNGGPGH (354 aa). One can recognise a Protein kinase domain in the interval 979–1254; it reads ISIIRELGQG…SIQEELRPSF (276 aa). Residues 985 to 993 and K1013 contribute to the ATP site; that span reads LGQGSFGMV. The active-site Proton acceptor is the D1115. Phosphotyrosine; by autocatalysis is present on residues Y1145 and Y1146. Residues 1267-1297 form a disordered region; the sequence is GARGSLPTTDAEPDSSPTPRDCSPQNGGPGH. Positions 1281–1297 are enriched in polar residues; that stretch reads SSPTPRDCSPQNGGPGH.

The protein belongs to the protein kinase superfamily. Tyr protein kinase family. Insulin receptor subfamily. In terms of assembly, probable tetramer of 2 alpha and 2 beta chains linked by disulfide bonds. The alpha chains contribute to the formation of the ligand-binding domain, while the beta chains carry the kinase domain. Autophosphorylated on tyrosine residues between pH 7.9 and pH 10.5.

Its subcellular location is the membrane. It carries out the reaction L-tyrosyl-[protein] + ATP = O-phospho-L-tyrosyl-[protein] + ADP + H(+). In terms of biological role, receptor with tyrosine-protein kinase activity. Functions as a pH sensing receptor which is activated by increased extracellular pH. Activates an intracellular signaling pathway that involves IRS1 and AKT1/PKB. The polypeptide is Insulin receptor-related protein (INSRR) (Homo sapiens (Human)).